The chain runs to 1269 residues: Protein cramped-like (1269 aa).

Over residues 1-12 (MTVKLGDGGSGE) the composition is skewed to gly residues. Positions 1–165 (MTVKLGDGGS…GKKVRRQWES (165 aa)) are disordered. Composition is skewed to basic and acidic residues over residues 13–24 (DGLKKLGKRAAD) and 43–52 (SGTKRDEKTP). Over residues 59 to 74 (PPAPPGAPQAPSPPQG) the composition is skewed to pro residues. The span at 105–123 (GNAGGSGPRGKGAEGGGSS) shows a compositional bias: gly residues. A compositionally biased stretch (low complexity) spans 124-147 (SGNVSGVAPAAPAGGSRSSSRNLG). Residues 151–165 (GEKEEGKKVRRQWES) show a composition bias toward basic and acidic residues. The region spanning 161–224 (RQWESWSTED…FYYRTWHKIT (64 aa)) is the SANT domain. Position 307 is a phosphoserine (S307). Disordered regions lie at residues 450–541 (IQSG…PGAL), 581–666 (DTRP…EVPA), 757–827 (VRPA…NDSD), 976–1034 (EGLS…DSFQ), 1055–1092 (IPLS…SQGE), and 1115–1157 (VPLS…PSDS). Residues 485 to 507 (SSGESSPESAPGEGAALSLSSPD) are compositionally biased toward low complexity. Composition is skewed to basic and acidic residues over residues 508 to 518 (APDRPPPRHQD) and 526 to 535 (TPAEGRDSPT). Composition is skewed to polar residues over residues 757–767 (VRPAQEEQSMT), 774–806 (TVSS…SSGL), and 982–1002 (SPLS…TGTH). 2 stretches are compositionally biased toward low complexity: residues 1055–1070 (IPLS…LSPP) and 1125–1140 (SDSS…SPQP). S1268 carries the post-translational modification Phosphoserine.

This sequence belongs to the cramped family.

The protein resides in the nucleus. The sequence is that of Protein cramped-like from Homo sapiens (Human).